The following is a 560-amino-acid chain: Nuclear receptor subfamily 5 group A member 2 (560 aa).

Residues 21–55 form a disordered region; that stretch reads IASAPGSETRHSPKREEQLREKRAGLPDRHRRPIP. Basic and acidic residues predominate over residues 28–48; it reads ETRHSPKREEQLREKRAGLPD. Positions 104-175 form a DNA-binding region, nuclear receptor; that stretch reads EELCPVCGDK…KCIDVGMKLE (72 aa). Zn(2+)-binding residues include cysteine 107, cysteine 110, cysteine 124, cysteine 127, cysteine 143, cysteine 149, cysteine 159, and cysteine 162. 2 NR C4-type zinc fingers span residues 107-127 and 143-167; these read CPVC…CESC and CIEN…FKKC. The interval 173–188 is C-terminal extension (CTE); the sequence is KLEAVRADRMRGGRNK. Residues 189–208 carry the FTZ-F1 box motif; the sequence is FGPMYKRDRALKQQKKALIR. Residue lysine 289 forms a Glycyl lysine isopeptide (Lys-Gly) (interchain with G-Cter in SUMO1) linkage. An NR LBD domain is found at 319–558; it reads SIPHLILELL…NLLIEMLHAK (240 aa). Positions 535 and 539 each coordinate a phospholipid derivative. Residues 547-558 form an AF-2 region; that stretch reads YNNLLIEMLHAK.

Belongs to the nuclear hormone receptor family. NR5 subfamily. As to quaternary structure, monomer; Binds DNA as a monomer. Interacts with nuclear receptor corepressors NR0B1 and NR0B2; repressing NR5A2 nuclear receptor activity. Interacts with nuclear receptor coactivators CTNNB1, PPARGC1A and NCOA2; interaction takes place following ligand-binding and promotes target gene activation. Interacts (when sumoylated) with GPS2; interaction with GPS2 onto hepatic acute phase protein promoters prevents N-Cor corepressor complex dissociation. Interacts with HNF1A. Interacts with GRIP1. Post-translationally, sumoylated by SUMO1 at Lys-289 during the hepatic acute phase response, leading to promote interaction with GPS2 and prevent N-Cor corepressor complex dissociation.

Its subcellular location is the nucleus. The protein resides in the chromosome. In terms of biological role, orphan nuclear receptor that binds DNA as a monomer to the 5'-TCAAGGCCA-3' sequence and controls expression of target genes: regulates key biological processes, such as early embryonic development, cholesterol and bile acid synthesis pathways, as well as liver and pancreas morphogenesis. Ligand-binding causes conformational change which causes recruitment of coactivators, promoting target gene activation. The specific ligand is unknown, but specific phospholipids, such as phosphatidylethanolamine, phosphatidylserine, dilauroyl phosphatidylcholine and diundecanoyl phosphatidylcholine can act as ligand in vitro. Acts as a pioneer transcription factor, which unwraps target DNA from histones and elicits local opening of closed chromatin. Plays a central role during preimplantation stages of embryonic development. Plays a minor role in zygotic genome activation (ZGA) by regulating a small set of two-cell stage genes. Plays a major role in morula development (2-16 cells embryos) by acting as a master regulator at the 8-cell stage, controlling expression of lineage-specifying transcription factors and genes involved in mitosis, telomere maintenance and DNA repair. Zygotic NR5A2 binds to both closed and open chromatin with other transcription factors, often at SINE B1/Alu repeats DNA elements, promoting chromatin accessibility at nearby regulatory regions. Also involved in the epiblast stage of development and embryonic stem cell pluripotency, by promoting expression of POU5F1/OCT4. Regulates other processes later in development, such as formation of connective tissue in lower jaw and middle ear, neural stem cell differentiation, ovarian follicle development and Sertoli cell differentiation. Involved in exocrine pancreas development and acinar cell differentiation. Acts as an essential transcriptional regulator of lipid metabolism. Key regulator of cholesterol 7-alpha-hydroxylase gene (CYP7A) expression in liver. Activates the transcription of CYP2C38. Also acts as a negative regulator of inflammation in different organs, such as intestine, liver and pancreas. Protects against intestinal inflammation via its ability to regulate glucocorticoid production. Plays an anti-inflammatory role during the hepatic acute phase response by acting as a corepressor: inhibits the hepatic acute phase response by preventing dissociation of the N-Cor corepressor complex. Acts as a regulator of immunity by promoting lymphocyte T-cell development, proliferation and effector functions. Also involved in resolution of endoplasmic reticulum stress in the liver. In Mus musculus (Mouse), this protein is Nuclear receptor subfamily 5 group A member 2.